Reading from the N-terminus, the 255-residue chain is Indole-3-glycerol phosphate synthase (255 aa).

This sequence belongs to the TrpC family.

The enzyme catalyses 1-(2-carboxyphenylamino)-1-deoxy-D-ribulose 5-phosphate + H(+) = (1S,2R)-1-C-(indol-3-yl)glycerol 3-phosphate + CO2 + H2O. The protein operates within amino-acid biosynthesis; L-tryptophan biosynthesis; L-tryptophan from chorismate: step 4/5. The protein is Indole-3-glycerol phosphate synthase (trpC) of Priestia megaterium (strain ATCC 12872 / QMB1551) (Bacillus megaterium).